A 201-amino-acid polypeptide reads, in one-letter code: Prostamide/prostaglandin F synthase (201 aa).

Belongs to the peroxiredoxin-like PRXL2 family. Prostamide/prostaglandin F synthase subfamily.

The protein localises to the cytoplasm. Its subcellular location is the cytosol. It carries out the reaction prostaglandin H2 + [thioredoxin]-dithiol = prostaglandin F2alpha + [thioredoxin]-disulfide. The enzyme catalyses prostamide F2alpha + [thioredoxin]-disulfide = prostamide H2 + [thioredoxin]-dithiol. In terms of biological role, catalyzes the reduction of prostaglandin-ethanolamide H(2) (prostamide H(2)) to prostamide F(2alpha) with NADPH as proton donor. Also able to reduce prostaglandin H(2) to prostaglandin F(2alpha). The polypeptide is Prostamide/prostaglandin F synthase (prxl2b) (Danio rerio (Zebrafish)).